The primary structure comprises 239 residues: Pyridoxine 5'-phosphate synthase (239 aa).

Asparagine 7 lines the 3-amino-2-oxopropyl phosphate pocket. Residue 9–10 (DH) coordinates 1-deoxy-D-xylulose 5-phosphate. A 3-amino-2-oxopropyl phosphate-binding site is contributed by arginine 18. The Proton acceptor role is filled by histidine 43. Residues arginine 45 and histidine 50 each contribute to the 1-deoxy-D-xylulose 5-phosphate site. Residue glutamate 70 is the Proton acceptor of the active site. Threonine 100 is a 1-deoxy-D-xylulose 5-phosphate binding site. Residue histidine 191 is the Proton donor of the active site. Residues glycine 192 and 213–214 (GH) contribute to the 3-amino-2-oxopropyl phosphate site.

It belongs to the PNP synthase family. In terms of assembly, homooctamer; tetramer of dimers.

It localises to the cytoplasm. The catalysed reaction is 3-amino-2-oxopropyl phosphate + 1-deoxy-D-xylulose 5-phosphate = pyridoxine 5'-phosphate + phosphate + 2 H2O + H(+). The protein operates within cofactor biosynthesis; pyridoxine 5'-phosphate biosynthesis; pyridoxine 5'-phosphate from D-erythrose 4-phosphate: step 5/5. Functionally, catalyzes the complicated ring closure reaction between the two acyclic compounds 1-deoxy-D-xylulose-5-phosphate (DXP) and 3-amino-2-oxopropyl phosphate (1-amino-acetone-3-phosphate or AAP) to form pyridoxine 5'-phosphate (PNP) and inorganic phosphate. In Geotalea daltonii (strain DSM 22248 / JCM 15807 / FRC-32) (Geobacter daltonii), this protein is Pyridoxine 5'-phosphate synthase.